A 909-amino-acid polypeptide reads, in one-letter code: Villin-1 (909 aa).

Gelsolin-like repeat units follow at residues 29–79, 149–189, 262–305, 391–448, 529–569, and 631–672; these read KQLI…VDSI, VRVK…QEKA, GNLH…TERK, LKVW…QDRA, MQAI…SDHE, and LKVK…KSKE. Disordered stretches follow at residues 733-781 and 816-835; these read SLKG…CSSE and DGVA…QKPR. Positions 752–762 are enriched in basic and acidic residues; sequence QSKDNASRDLQ. The residue at position 780 (serine 780) is a Phosphoserine. Positions 844 to 909 constitute an HP domain; sequence SLESLAYSYE…NKLKISLHLF (66 aa).

This sequence belongs to the villin/gelsolin family. In terms of tissue distribution, expressed in all tissues examined. Mainly detected in the vascular tissue and the pericycle of roots and in the vasculature of leaves. Not expressed in the root cap.

The protein localises to the cytoplasm. It localises to the cytoskeleton. Functionally, binds actin and actin filament bundles in a Ca(2+)/calmodulin-insensitive manner, but is unable to sever, cap, and nucleate actin filament formation in vitro. Does not protect individual filaments from severing by VLN3 (AC O81645). The chain is Villin-1 from Arabidopsis thaliana (Mouse-ear cress).